The primary structure comprises 128 residues: Translation initiation factor 5A (128 aa).

Position 35 is a hypusine (Lys-35).

Belongs to the eIF-5A family.

It is found in the cytoplasm. Functions by promoting the formation of the first peptide bond. The chain is Translation initiation factor 5A (eif5a) from Methanosarcina acetivorans (strain ATCC 35395 / DSM 2834 / JCM 12185 / C2A).